Here is a 1785-residue protein sequence, read N- to C-terminus: Plexin-2 (1785 aa).

The signal sequence occupies residues 1 to 17 (MLPESVFLLLISHFLRA). In terms of domain architecture, Sema spans 18-444 (VTQPPFETEG…MPYGIILEEL (427 aa)). Over 18 to 1139 (VTQPPFETEG…SDHALPSRLS (1122 aa)) the chain is Extracellular. A glycan (N-linked (GlcNAc...) asparagine) is linked at N66. Disulfide bonds link C84/C91, C118/C126, C247/C349, C263/C300, C318/C336, C447/C464, C453/C487, C456/C473, and C467/C479. Residue N249 is glycosylated (N-linked (GlcNAc...) asparagine). Residues 446-488 (TCSHHSSCTECLVSVDPLCQWCHPTQSCTTSARCTSPVTSQCP) enclose the PSI 1 domain. N-linked (GlcNAc...) asparagine glycosylation is found at N502, N536, and N572. C524 and C544 are disulfide-bonded. The region spanning 577 to 617 (DCSGYGTCSSCMSSEYNCAWCSGLHKCSNSCGALEKSKACV) is the PSI 2 domain. 2 N-linked (GlcNAc...) asparagine glycosylation sites follow: N679 and N702. Residues 707-748 (SCTNLASDCSSCLALSPSLSCGWCNRQCSHECHESKATAVCD) enclose the PSI 3 domain. IPT/TIG domains follow at residues 750 to 837 (PRID…LYSF), 840 to 924 (TSIF…PFEY), and 928 to 1040 (PSIS…LSPF). N864, N886, N984, and N1016 each carry an N-linked (GlcNAc...) asparagine glycan. The chain crosses the membrane as a helical span at residues 1140–1160 (LLILGLLLFIVVTLTVMCLVF). Residues 1159 to 1197 (VFKRRRQEREKEYRKIQLQMENLENNVRKECKQAFAELQ) adopt a coiled-coil conformation. Residues 1161–1785 (KRRRQEREKE…HIYSTISDYE (625 aa)) lie on the Cytoplasmic side of the membrane.

It belongs to the plexin family. As to quaternary structure, interacts with mab-20. Expressed predominantly in the central nervous system from embryonic to adult stages. Expressed in early embryos in ventral neuroblasts. Expressed in neurons and in a subset of posterior lateral and ventral epidermal cells following epidermal enclosure. Present in neurons, muscles and weakly expressed in epidermal cells of the larval tail.

The protein resides in the cell membrane. Involved as a receptor for mab-20/sema-2a in the formation or stabilization of cell-cell contacts at several stages of epithelial morphogenesis. In early embryonic development, required for proper ventral closure of the epidermis. During male tail morphogenesis, involved in precursor cell sorting and in the formation of distinct sensory rays. Involved in axon guidance of SDQL neurons during neurogenesis. Probably in response to stimulation by mab-20, regulates fln-1-mediated remodeling of the actin cytoskeleton and thus axon guidance and/or fasciculation of DD/VD neurons. The sequence is that of Plexin-2 from Caenorhabditis elegans.